The sequence spans 85 residues: Homeobox protein knotted-1-like 5 (85 aa).

The ELK domain maps to 1–21 (ELKEMLLKKYSGCLSRLRSEF). The segment at residues 22–85 (LKKRKKGKLP…NQRKRHWKPS (64 aa)) is a DNA-binding region (homeobox; TALE-type).

Belongs to the TALE/KNOX homeobox family. In terms of tissue distribution, strongly expressed in ear inflorescence primordia and shoot meristem. Weakly expressed in embryos. Absent from leaves.

The protein resides in the nucleus. In terms of biological role, probably binds to the DNA sequence 5'-TGAC-3'. The polypeptide is Homeobox protein knotted-1-like 5 (KNOX5) (Zea mays (Maize)).